The primary structure comprises 212 residues: Pyridoxine/pyridoxamine 5'-phosphate oxidase (212 aa).

Residues R8–Y11 and K66 contribute to the substrate site. FMN-binding positions include R61–K66, F76–T77, R82, K83, and Q105. Residues Y123, R127, and S131 each contribute to the substrate site. FMN-binding positions include Q140 to S141 and W184. Position 190 to 192 (R190 to H192) interacts with substrate. An FMN-binding site is contributed by R194.

It belongs to the pyridoxamine 5'-phosphate oxidase family. Homodimer. Requires FMN as cofactor.

The catalysed reaction is pyridoxamine 5'-phosphate + O2 + H2O = pyridoxal 5'-phosphate + H2O2 + NH4(+). It carries out the reaction pyridoxine 5'-phosphate + O2 = pyridoxal 5'-phosphate + H2O2. It participates in cofactor metabolism; pyridoxal 5'-phosphate salvage; pyridoxal 5'-phosphate from pyridoxamine 5'-phosphate: step 1/1. The protein operates within cofactor metabolism; pyridoxal 5'-phosphate salvage; pyridoxal 5'-phosphate from pyridoxine 5'-phosphate: step 1/1. In terms of biological role, catalyzes the oxidation of either pyridoxine 5'-phosphate (PNP) or pyridoxamine 5'-phosphate (PMP) into pyridoxal 5'-phosphate (PLP). This Paraburkholderia phymatum (strain DSM 17167 / CIP 108236 / LMG 21445 / STM815) (Burkholderia phymatum) protein is Pyridoxine/pyridoxamine 5'-phosphate oxidase.